The sequence spans 723 residues: BBSome complex assembly protein BBS10 (723 aa).

Belongs to the TCP-1 chaperonin family. Component of a complex composed at least of MKKS, BBS10, BBS12, TCP1, CCT2, CCT3, CCT4, CCT5 and CCT8.

Its subcellular location is the cell projection. It localises to the cilium. Functionally, probable molecular chaperone that assists the folding of proteins upon ATP hydrolysis. Plays a role in the assembly of BBSome, a complex involved in ciliogenesis regulating transports vesicles to the cilia. Involved in adipogenic differentiation. This Homo sapiens (Human) protein is BBSome complex assembly protein BBS10 (BBS10).